A 603-amino-acid chain; its full sequence is Prosaposin receptor GPR37 (603 aa).

The first 26 residues, 1 to 26 (MPAPGAPLSRTSRLLLLLLFKVSVSA), serve as a signal peptide directing secretion. Residues 27–255 (ALSFVPEPRN…QESYGAYAVM (229 aa)) lie on the Extracellular side of the membrane. Residue Asn-36 is glycosylated (N-linked (GlcNAc...) asparagine). Residues 39–232 (CLGESCSPLI…GGPRRGNSTN (194 aa)) form a disordered region. 3 stretches are compositionally biased toward basic and acidic residues: residues 51–79 (RSRDAGGPRNSARDALRVHVPREKLEAEV), 145–158 (TSERGEMSSKRDEI), and 165–175 (HSVKTEPEPRD). N-linked (GlcNAc...) asparagine glycans are attached at residues Asn-212 and Asn-229. The chain crosses the membrane as a helical span at residues 256–276 (CLSVVIFGTGIIGNLAVMCIV). Over 277–289 (CHNYYMRSISNSL) the chain is Cytoplasmic. The helical transmembrane segment at 290-310 (LANLAFWDFLIIFFCLPLVIF) threads the bilayer. Residues 311–325 (HELTKKWLLEDFSCK) lie on the Extracellular side of the membrane. An intrachain disulfide couples Cys-324 to Cys-409. A helical transmembrane segment spans residues 326 to 346 (IVPYIEVASLGVTTFTLCALC). Residues 347–369 (IDRFRAATNVQMYYEMIENCSST) are Cytoplasmic-facing. Residues 370–390 (TAKLAVIWVGALLLALPEVVL) traverse the membrane as a helical segment. The Extracellular segment spans residues 391–433 (RQLSKEDLGFSGQAPAERCVIKISPDLPDTIYVLALTYDGARL). The chain crosses the membrane as a helical span at residues 434–454 (WWYFGCYFCLPTLFTITCSLV). The Cytoplasmic portion of the chain corresponds to 455–483 (TARKIRKAEKASTRGNKRQIHLESQMNCT). A helical transmembrane segment spans residues 484-504 (VVALTILYGFCIIPENICNIV). The Extracellular segment spans residues 505–521 (TAYMATGVSQQTMDLLN). A helical transmembrane segment spans residues 522-542 (IISQFLLFFKSCVTPVLLFCL). Topologically, residues 543–603 (CRPFSRAFME…STFASVGTHC (61 aa)) are cytoplasmic.

This sequence belongs to the G-protein coupled receptor 1 family. In terms of assembly, forms a complex with PRKN, STUB1 and HSP70. The amount of STUB1 in the complex increases during ER stress. STUB1 promotes the dissociation of HSP70 from PRKN, thus facilitating PRKN-mediated GPR37 ubiquitination. Interacts with PACRG. In terms of processing, the N-terminus is cleaved by ADAM10 metalloproteinase; mediating limited proteolysis leading to the release of receptor ectodomain by shedding. In addition, cleaved by FURIN between Arg-53 and Asp-54. Post-translationally, ubiquitinated by PRKN in the presence of UBE2E1 and UBE2L3 in the endoplasmic reticulum. The unfolded form is specifically ubiquitinated by SYVN1, which promotes its proteasomal degradation and prevents neuronal cell death. In terms of tissue distribution, highly expressed in the brain. High levels of expression were seen in fiber tracts such as the corpus callosum, anterior commissure, fornix, internal capsule, cerebral peduncles, and stria terminalis. Additionally, moderate levels of expression were seen in the pyramidal tracts and cerebellar peduncles, as well as in the spinal tract of the trigeminal nerve and the spinal fasciculi.

It localises to the cell projection. It is found in the dendrite. The protein resides in the synapse. The protein localises to the cell membrane. Its subcellular location is the endoplasmic reticulum membrane. Functionally, G-protein-coupled receptor that plays a role in several physiological pathways such as resolution of inflammatory pain and oligodendrocyte differentiation. Acts as a receptor for several ligands including prosaposin, osteocalcin or neuroprotectin D1. Ligand binding induces endocytosis, followed by an ERK phosphorylation cascade. Acts as a receptor for osteocalcin (OCN) to regulate oligodendrocyte differentiation and central nervous system myelination. Mechanistically, plays a negative role in oligodendrocyte differentiation and myelination during development via activation of the ERK1/2 signaling pathway. Therefore, regulates the stability of myelin or resistance of myelin itself to demyelination. Upon activation by neuroprotectin D1 (NPD1), promotes the activation of phagocytosis in macrophages as well as the shift in cytokine release toward an anti-inflammatory profile, and thus helps to reverse inflammatory pain. In addition, the increased macrophage phagocytosis mediates protection against sepsis upon pathogen infection. Additionally, extracellular vesicles derived from efferocyte express prosaposin, which binds to macrophage GPR37 to increase expression of the efferocytosis receptor TIM4 via an ERK-AP1-dependent signaling axis, leading to increased macrophage efferocytosis efficiency and accelerated resolution of inflammation. May also act as a maturation factor of LRP6, protecting LRP6 from the endoplasmic reticulum (ER)-associated protein degradation (ERAD) and thereby promoting the Wnt/beta-catenin signaling pathway. This Rattus norvegicus (Rat) protein is Prosaposin receptor GPR37 (Gpr37).